A 425-amino-acid chain; its full sequence is Probable sucrose-phosphatase 3a (425 aa).

The protein belongs to the sucrose phosphatase family. In terms of assembly, homodimer. Mg(2+) is required as a cofactor.

The enzyme catalyses sucrose 6(F)-phosphate + H2O = sucrose + phosphate. It functions in the pathway glycan biosynthesis; sucrose biosynthesis; sucrose from D-fructose 6-phosphate and UDP-alpha-D-glucose: step 2/2. Its function is as follows. Catalyzes the final step of sucrose synthesis. The protein is Probable sucrose-phosphatase 3a (SPP3A) of Arabidopsis thaliana (Mouse-ear cress).